Reading from the N-terminus, the 63-residue chain is Transmembrane protein 033R (63 aa).

This chain is Transmembrane protein 033R, found in Dryophytes versicolor (chameleon treefrog).